Consider the following 329-residue polypeptide: G-protein coupled bile acid receptor 1 (329 aa).

At 1-19 (MTSNSTREVPSPVPAGALG) the chain is on the extracellular side. N-linked (GlcNAc...) asparagine glycosylation is present at Asn-4. Residues 20-40 (LSLALASLIVAANLLLAVGIA) form a helical membrane-spanning segment. Over 41–52 (GDRRLRSPPAGC) the chain is Cytoplasmic. A helical transmembrane segment spans residues 53–73 (FFLSLLLAGLLTGLALPALPV). Over 74-85 (LWSQSRRGYWSC) the chain is Extracellular. Cys-85 and Cys-155 form a disulfide bridge. The helical transmembrane segment at 86 to 106 (LFLYLAPNFCFLSLLANLLLV) threads the bilayer. Over 107-125 (HGERYMAVLRPLRPRGSMR) the chain is Cytoplasmic. A helical transmembrane segment spans residues 126-146 (LALLLTWAAPLLFASLPALGW). Residues 147-165 (NHWAPGGNCSSQAVFPAPY) are Extracellular-facing. The N-linked (GlcNAc...) asparagine glycan is linked to Asn-154. Residues 166-186 (LYLEIYGLLLPAVGAAALLSV) form a helical membrane-spanning segment. The Cytoplasmic portion of the chain corresponds to 187–230 (RVLVTAHRQLQDIRRLERAVCRGAPSALARALTWRQARAQAGAT). Residues 231–251 (LLFGLCWGPYVATLLLSVLAF) traverse the membrane as a helical segment. The Extracellular portion of the chain corresponds to 252-261 (EQRPPLGPGT). The chain crosses the membrane as a helical span at residues 262 to 282 (LLSLISLGSASAAAVPVAMGL). Topologically, residues 283–329 (GDQRYTGPWRVAAQKWLRMLRGRPQSSPGPSTAYHTSSQSSVDLDLN) are cytoplasmic. Positions 304 to 329 (GRPQSSPGPSTAYHTSSQSSVDLDLN) are disordered. Positions 306-329 (PQSSPGPSTAYHTSSQSSVDLDLN) are enriched in polar residues.

It belongs to the G-protein coupled receptor 1 family.

It is found in the cell membrane. Its function is as follows. Receptor for bile acid. Bile acid-binding induces its internalization, activation of extracellular signal-regulated kinase and intracellular cAMP production. May be involved in the suppression of macrophage functions by bile acids. Involved in bile acid promoted GLP1R secretion. This chain is G-protein coupled bile acid receptor 1 (GPBAR1), found in Bos taurus (Bovine).